The following is a 280-amino-acid chain: NAD(+) hydrolase TirS (280 aa).

Positions 22–94 (MNKLPDEIDR…KINLQKEQSR (73 aa)) form a coiled coil. One can recognise a TIR domain in the interval 141-275 (IEYDVFLSHS…EIVEKIYQVI (135 aa)). Residues 150–151 (SS) and Glu180 each bind NAD(+). Residue Glu216 is part of the active site.

The protein resides in the secreted. The enzyme catalyses NAD(+) + H2O = ADP-D-ribose + nicotinamide + H(+). It carries out the reaction NADP(+) + H2O = ADP-D-ribose 2'-phosphate + nicotinamide + H(+). Virulence factor that suppresses host Toll-like receptor 2 (TLR2)-mediated NF-kappa-B signaling upon infection. NAD(+) hydrolase (NADase) that catalyzes cleavage of NAD(+) into ADP-D-ribose (ADPR) and nicotinamide. Also able to hydrolyze NADP(+), but not other NAD(+)-related molecules. Able to reduce NAD(+) levels in host cells. This is NAD(+) hydrolase TirS from Staphylococcus aureus (strain MSSA476).